The sequence spans 581 residues: Protein SPT2 homolog (581 aa).

The span at 26–35 (YYSTKYSPPK) shows a compositional bias: low complexity. Disordered regions lie at residues 26-50 (YYST…NIQK) and 145-495 (QEDK…EYDS). A coiled-coil region spans residues 36 to 76 (KQSKESKQLSSNIQKFLQKKEAEEAEKKRLERQKLNDLLAK). Over residues 162–181 (SGTKERVKAAITREREEAKG) the composition is skewed to basic and acidic residues. Composition is skewed to polar residues over residues 182 to 197 (NTRQ…SSAT) and 204 to 213 (VARSYSTSKT). Basic and acidic residues-rich tracts occupy residues 218–236 (NAEK…EQRR) and 256–312 (LAEK…KETP). Residues 276-307 (ERLLSAREKRELEERQRQQEQRAQRLKMRESE) adopt a coiled-coil conformation. Over residues 352–376 (SSASSTSLSSSNSHSSASRSSVSSS) the composition is skewed to low complexity. Over residues 447–461 (TRQTPSSDVQRSQGG) the composition is skewed to polar residues. The segment covering 486 to 495 (DDDDEDEYDS) has biased composition (acidic residues).

The protein belongs to the SPT2 family.

This chain is Protein SPT2 homolog, found in Drosophila melanogaster (Fruit fly).